The following is a 123-amino-acid chain: uncharacterized protein (123 aa).

The helical transmembrane segment at 14-34 (VVLKITAVVCSVFSIRVLILA) threads the bilayer.

The protein resides in the membrane. This is an uncharacterized protein from Saccharomyces cerevisiae (strain ATCC 204508 / S288c) (Baker's yeast).